The sequence spans 353 residues: Variable large protein 12 (353 aa).

The first 18 residues, M1 to S18, serve as a signal peptide directing secretion. Residue C19 is the site of N-palmitoyl cysteine attachment. C19 carries the S-diacylglycerol cysteine lipid modification.

The protein belongs to the variable large protein (Vlp) family. Beta subfamily.

It localises to the cell outer membrane. In terms of biological role, the Vlp and Vsp proteins are antigenically distinct proteins, only one vlp or vsp gene is transcriptionally active at any one time. Switching between these genes is a mechanism of host immune response evasion. In Borrelia hermsii, this protein is Variable large protein 12.